We begin with the raw amino-acid sequence, 639 residues long: Protein P1 (639 aa).

The first 20 residues, 1–20, serve as a signal peptide directing secretion; sequence MNRFTAYAALFFMFSLCSTA. Transmembrane regions (helical) follow at residues 121–141, 144–164, and 172–192; these read AASV…WTLA, ITLF…LGCI, and ALSL…KIIW. The 193-residue stretch at 207-399 folds into the Peptidase S39 domain; that stretch reads VEGYKGFSVP…GITSPNYVFE (193 aa). Active-site for protease activity residues include H255, D286, and S354. 2 disordered regions span residues 455 to 515 and 539 to 639; these read ATNA…PPMD and VSRV…NSKA. A compositionally biased stretch (polar residues) spans 463 to 488; that stretch reads TAQTNSAEKTAPSTSAEKTALTNKPL. Residues 548-561 show a composition bias toward basic residues; sequence QKPKQKKRGRRGGK. The segment covering 566–577 has biased composition (polar residues); that stretch reads SLPPTSTQSTSG. A compositionally biased stretch (low complexity) spans 587–602; that stretch reads ASGSAGTSRATTTPAP.

The protein belongs to the peptidase S39B family. Specific enzymatic cleavages in vivo yield mature proteins. The protease probably cleaves itself and releases the VPg protein. The VPg protein is probably further cleaved in its C-terminus.

It localises to the membrane. Precursor from which the VPg molecule is probably released at the onset of the RNA synthesis. Essential for virus replication. Participates, together with the proteins P0 and P7, in the inhibition of the induction of aphid-induced host phytohormones. This could play a role in the attraction to the infected plants by aphids. The polypeptide is Protein P1 (Solanum tuberosum (Potato)).